Consider the following 160-residue polypeptide: Cytochrome c-type biogenesis protein CcmE (160 aa).

Residues 1–7 (MTRKQRR) lie on the Cytoplasmic side of the membrane. A helical; Signal-anchor for type II membrane protein membrane pass occupies residues 8-28 (ATFIAVSLGILALAVGLVLYA). Residues 29-160 (MRDSIVYFYS…SETYGQGSYP (132 aa)) are Periplasmic-facing. Heme-binding residues include H122 and Y126. The interval 141–160 (WQGEGAEAPHSETYGQGSYP) is disordered.

Belongs to the CcmE/CycJ family.

It is found in the cell inner membrane. In terms of biological role, heme chaperone required for the biogenesis of c-type cytochromes. Transiently binds heme delivered by CcmC and transfers the heme to apo-cytochromes in a process facilitated by CcmF and CcmH. The sequence is that of Cytochrome c-type biogenesis protein CcmE from Parvibaculum lavamentivorans (strain DS-1 / DSM 13023 / NCIMB 13966).